The following is a 349-amino-acid chain: Phenylalanine--tRNA ligase alpha subunit (349 aa).

Position 259 (glutamate 259) interacts with Mg(2+).

It belongs to the class-II aminoacyl-tRNA synthetase family. Phe-tRNA synthetase alpha subunit type 1 subfamily. In terms of assembly, tetramer of two alpha and two beta subunits. Mg(2+) serves as cofactor.

The protein localises to the cytoplasm. The enzyme catalyses tRNA(Phe) + L-phenylalanine + ATP = L-phenylalanyl-tRNA(Phe) + AMP + diphosphate + H(+). The sequence is that of Phenylalanine--tRNA ligase alpha subunit from Lactobacillus delbrueckii subsp. bulgaricus (strain ATCC 11842 / DSM 20081 / BCRC 10696 / JCM 1002 / NBRC 13953 / NCIMB 11778 / NCTC 12712 / WDCM 00102 / Lb 14).